The chain runs to 723 residues: Translation initiation factor IF-2 (723 aa).

The disordered stretch occupies residues 112 to 138 (KIFNNKKNKKQKPQQAPQQEVQKKKEK). Residues 114–123 (FNNKKNKKQK) are compositionally biased toward basic residues. A tr-type G domain is found at 224-393 (ERPPVVTIMG…LLVSEMEELK (170 aa)). The segment at 233–240 (GHVDHGKT) is G1. 233 to 240 (GHVDHGKT) is a GTP binding site. A G2 region spans residues 258 to 262 (GITQH). The tract at residues 279–282 (DTPG) is G3. GTP contacts are provided by residues 279–283 (DTPGH) and 333–336 (NKID). The tract at residues 333 to 336 (NKID) is G4. Positions 369 to 371 (SAL) are G5.

It belongs to the TRAFAC class translation factor GTPase superfamily. Classic translation factor GTPase family. IF-2 subfamily.

The protein localises to the cytoplasm. Functionally, one of the essential components for the initiation of protein synthesis. Protects formylmethionyl-tRNA from spontaneous hydrolysis and promotes its binding to the 30S ribosomal subunits. Also involved in the hydrolysis of GTP during the formation of the 70S ribosomal complex. The polypeptide is Translation initiation factor IF-2 (Anoxybacillus flavithermus (strain DSM 21510 / WK1)).